The chain runs to 353 residues: Protein RecA (353 aa).

ATP is bound at residue 65 to 72 (GPESSGKT).

It belongs to the RecA family.

Its subcellular location is the cytoplasm. Its function is as follows. Can catalyze the hydrolysis of ATP in the presence of single-stranded DNA, the ATP-dependent uptake of single-stranded DNA by duplex DNA, and the ATP-dependent hybridization of homologous single-stranded DNAs. It interacts with LexA causing its activation and leading to its autocatalytic cleavage. The protein is Protein RecA of Aeromonas salmonicida (strain A449).